A 114-amino-acid polypeptide reads, in one-letter code: SCP2 domain-containing protein YusD (114 aa).

The SCP2 domain occupies 21–101 (NASTLLITFQ…RALLKLEAIL (81 aa)).

The protein is SCP2 domain-containing protein YusD (yusD) of Bacillus subtilis (strain 168).